A 53-amino-acid chain; its full sequence is Small polypeptide DEVIL 16 (53 aa).

Residue N6 is glycosylated (N-linked (GlcNAc...) asparagine). The required for DVL/RTFL small polypeptide activity stretch occupies residues 14-45 (TFGQKCSHVVKKQRAKFYILRRCIAMLVCWHD). The helical transmembrane segment at 30 to 46 (FYILRRCIAMLVCWHDQ) threads the bilayer.

It belongs to the DVL/RTFL small polypeptides family. As to expression, mostly expressed in stems, flower buds, flowers and seedling shoots, to a lesser extent, in roots and young cauline leaves, but not in mature rosette leaves. Barely observed in cotyledons and leaf primordia.

Its subcellular location is the cell membrane. In terms of biological role, small polypeptide acting as a regulatory molecule which coordinates cellular responses required for differentiation, growth and development, probably by restricting polar cell proliferation in lateral organs (e.g. leaves) and coordinating socket cell recruitment and differentiation at trichome sites. Regulates the positional cue and cell proliferation along the body axis. This Arabidopsis thaliana (Mouse-ear cress) protein is Small polypeptide DEVIL 16.